A 67-amino-acid chain; its full sequence is Small ribosomal subunit protein eS31 (67 aa).

Zn(2+)-binding residues include C31, C34, C49, and C52. The C4-type zinc finger occupies 31–52 (CPKCGAGVFMAEHLNRFACGKC).

This sequence belongs to the eukaryotic ribosomal protein eS31 family. As to quaternary structure, part of the 30S ribosomal subunit. The cofactor is Zn(2+).

The polypeptide is Small ribosomal subunit protein eS31 (Methanococcus maripaludis (strain C7 / ATCC BAA-1331)).